A 232-amino-acid polypeptide reads, in one-letter code: Floral homeotic protein APETALA 3 (232 aa).

The region spanning 3–57 is the MADS-box domain; the sequence is RGKIQIKRIENQTNRQVTYSKRRNGLFKKAHELTVLCDARVSIIMFSSSNKLHEY. The stretch at 75 to 164 forms a coiled coil; it reads SDVDVWATQY…KSQQDIQKNL (90 aa). One can recognise a K-box domain in the interval 84-174; that stretch reads YERMQETKRK…IHELELRAED (91 aa).

Forms a heterodimer with PISTILLATA, capable of binding to CArG-box sequences. AP3/PI heterodimer binds AP1 or SEP3 to form complexes. Expressed in petals and stamens.

The protein resides in the nucleus. Its function is as follows. Probable transcription factor involved in the genetic control of flower development. Is required for normal development of petals and stamens in the wild-type flower. Forms a heterodimer with PISTILLATA that is required for autoregulation of both AP3 and PI genes. AP3/PI heterodimer interacts with APETALA1 or SEPALLATA3 to form a ternary complex that could be responsible for the regulation of the genes involved in the flower development. AP3/PI heterodimer activates the expression of NAP. AP3/PI prevents GATA22/GNL and GATA21/GNC expression. This is Floral homeotic protein APETALA 3 (AP3) from Arabidopsis thaliana (Mouse-ear cress).